The sequence spans 345 residues: Probable translocation protein y4yO (345 aa).

The span at 1–22 (MSDTSEEKSHGATPKKLSDARK) shows a compositional bias: basic and acidic residues. The tract at residues 1 to 25 (MSDTSEEKSHGATPKKLSDARKRGQ) is disordered. Helical transmembrane passes span 87–107 (LATV…AALL), 151–171 (VLVL…TMVY), and 189–209 (QLIG…LLLQ).

This sequence belongs to the type III secretion exporter family.

The protein localises to the cell membrane. Functionally, could be involved in the secretion of an unknown factor. The protein is Probable translocation protein y4yO of Sinorhizobium fredii (strain NBRC 101917 / NGR234).